Reading from the N-terminus, the 88-residue chain is LYR motif-containing protein 2 (88 aa).

A mitochondrion-targeting transit peptide spans 1 to 19 (MAASRLPPAALTLKQFMRR).

This sequence belongs to the complex I LYR family.

Its subcellular location is the mitochondrion. Functionally, involved in efficient integration of the N-module into mitochondrial respiratory chain complex I. The chain is LYR motif-containing protein 2 (Lyrm2) from Mus musculus (Mouse).